Reading from the N-terminus, the 248-residue chain is Tyrosine recombinase XerD-like (248 aa).

The region spanning 1 to 72 (MIAFIEPFLA…TVNQFLYYLY (72 aa)) is the Core-binding (CB) domain. Positions 92–248 (SLKPQLTRLD…PITLEKYYKM (157 aa)) constitute a Tyr recombinase domain. Arg-213 is a catalytic residue. Tyr-245 serves as the catalytic O-(3'-phospho-DNA)-tyrosine intermediate.

The protein belongs to the 'phage' integrase family. XerD-like subfamily.

It is found in the cytoplasm. Putative tyrosine recombinase. Not involved in the cutting and rejoining of the recombining DNA molecules on dif(SL) site. In Streptococcus equi subsp. zooepidemicus (strain MGCS10565), this protein is Tyrosine recombinase XerD-like.